A 513-amino-acid polypeptide reads, in one-letter code: Histidine--tRNA ligase (513 aa).

The N-terminal 24 residues, 1–24 (MADKAQLQEAIKTQGEVVRKLKSE), are a transit peptide targeting the mitochondrion. A WHEP-TRS domain is found at 3 to 59 (DKAQLQEAIKTQGEVVRKLKSEKASKEQIDEEVARLLQLKAQLGGDEGKHVFVLKTA). Residues 130–132 (DLT), Arg-157, Gln-173, Asp-177, Arg-326, and 330–331 (YY) contribute to the L-histidine site.

It belongs to the class-II aminoacyl-tRNA synthetase family.

The protein localises to the cytoplasm. Its subcellular location is the mitochondrion. It carries out the reaction tRNA(His) + L-histidine + ATP = L-histidyl-tRNA(His) + AMP + diphosphate + H(+). Functionally, catalyzes the aminoacylation of histidyl-tRNA. The protein is Histidine--tRNA ligase of Danio rerio (Zebrafish).